A 445-amino-acid polypeptide reads, in one-letter code: UPF0210 protein llmg_1581 (445 aa).

This sequence belongs to the UPF0210 family. Homodimer.

The protein is UPF0210 protein llmg_1581 of Lactococcus lactis subsp. cremoris (strain MG1363).